The chain runs to 1181 residues: Sodium/potassium/calcium exchanger 1 (1181 aa).

Residues 1–419 (MGKLIRMGTQ…DLFSVEDRRQ (419 aa)) lie on the Extracellular side of the membrane. Disordered regions lie at residues 107–232 (AMED…TSLK), 255–276 (SLVG…STTP), and 300–323 (STPA…GTST). The segment covering 124 to 136 (SLKNNYSPTTAGT) has biased composition (polar residues). Asparagine 271 is a glycosylation site (N-linked (GlcNAc...) asparagine). The segment covering 301-311 (TPATTEGSTAA) has biased composition (polar residues). The chain crosses the membrane as a helical span at residues 420-440 (GWVVLHIFGMTYVFVALAIVC). Over 441–464 (DEYFVPALGVITDKLQISEDVAGA) the chain is Cytoplasmic. The Alpha-1 repeat unit spans residues 461–501 (VAGATFMAAGGSAPELFTSLIGVFISHSNVGIGTIVGSAVF). The helical transmembrane segment at 465–485 (TFMAAGGSAPELFTSLIGVFI) threads the bilayer. Residues 486-491 (SHSNVG) are Extracellular-facing. The helical transmembrane segment at 492–512 (IGTIVGSAVFNILFVIGTCAL) threads the bilayer. The Cytoplasmic segment spans residues 513–519 (FSREILN). The chain crosses the membrane as a helical span at residues 520–544 (LTWWPLFRDVSFYILDLSMLIVFFL). Topologically, residues 545-552 (DSLIAWWE) are extracellular. The chain crosses the membrane as a helical span at residues 553–569 (SLLLLLAYALYVFTMKW). The Cytoplasmic portion of the chain corresponds to 570 to 989 (NKQIERWVKE…SLEWPESRQK (420 aa)). The segment at 598-617 (PSDGAIEENEQQDNKKLKLP) is disordered. The residue at position 625 (serine 625) is a Phosphoserine. Positions 650-983 (GEARPSKDKQ…ESEEPLSLEW (334 aa)) are disordered. Threonine 690 carries the post-translational modification Phosphothreonine. The span at 701-715 (GDQEEDPGCQEDVDE) shows a compositional bias: acidic residues. 14 tandem repeats follow at residues 730–741 (ETEAEGKKDEEG), 742–754 (ETEA…GQEE), 755–766 (ETETKGKEKQEG), 767–778 (ETESEGKDEQEG), 779–791 (ETEA…DHEG), 792–804 (ETEA…EHEG), 805–817 (ETEA…EQEG), 818–830 (ETEA…EQEG), 831–843 (ETEA…EHEV), 844–856 (ETEA…NHEG), 857–869 (ETEA…DHEG), 870–881 (ETEAEGNVEHQG), 882–893 (ETEAEGKVEHEG), and 894–905 (ETEAGEKDEHEG). 3 stretches are compositionally biased toward basic and acidic residues: residues 730 to 750 (ETEA…RKED), 757 to 775 (ETKG…GKDE), and 782 to 805 (AEGK…HEGE). Positions 730 to 905 (ETEAEGKKDE…EAGEKDEHEG (176 aa)) are 14 X approximate tandem repeats. Positions 806-820 (TEAEGTEDEQEGETE) are enriched in acidic residues. Residues 834-906 (AEGKEVEHEV…AGEKDEHEGQ (73 aa)) show a composition bias toward basic and acidic residues. 2 stretches are compositionally biased toward acidic residues: residues 921-931 (GEAEANAEDQC) and 949-979 (GDSE…EEPL). Residues 990–1010 (QAIYLFLLPIVFPLWLTIPDV) traverse the membrane as a helical segment. The Extracellular segment spans residues 1011–1017 (RRQEARK). A helical transmembrane segment spans residues 1018 to 1038 (FFVITFLGSIIWIAMFSYLMV). The Cytoplasmic segment spans residues 1039–1053 (WWAHQVGETIGISEE). The helical transmembrane segment at 1054 to 1074 (IMGLTILAAGTSIPDLITSVI) threads the bilayer. The Alpha-2 repeat unit spans residues 1061-1092 (AAGTSIPDLITSVIVARKGLGDMAVSSSVGSN). Residues 1075–1092 (VARKGLGDMAVSSSVGSN) are Extracellular-facing. Residues 1093 to 1113 (IFDITVGLPVPWLLFSLINAL) traverse the membrane as a helical segment. Residues 1114–1121 (QPIPVSSN) lie on the Cytoplasmic side of the membrane. Residues 1122–1142 (GLFCAIVLLFLMLLFVIFSIA) traverse the membrane as a helical segment. The Extracellular portion of the chain corresponds to 1143–1150 (SCKWRMNK). The chain crosses the membrane as a helical span at residues 1151–1171 (ILGFTMFLLYFVFLVISVMLE). Residues 1172 to 1181 (DRIISCPVSV) lie on the Cytoplasmic side of the membrane.

This sequence belongs to the Ca(2+):cation antiporter (CaCA) (TC 2.A.19) family. SLC24A subfamily. In terms of processing, the uncleaved signal sequence is required for efficient membrane targeting and proper membrane integration and topology. In terms of tissue distribution, highly expressed in the eye.

The protein localises to the cell membrane. It carries out the reaction Ca(2+)(out) + K(+)(out) + 4 Na(+)(in) = Ca(2+)(in) + K(+)(in) + 4 Na(+)(out). Its function is as follows. Calcium, potassium:sodium antiporter that transports 1 Ca(2+) and 1 K(+) in exchange for 4 Na(+). Critical component of the visual transduction cascade, controlling the calcium concentration of outer segments during light and darkness. Light causes a rapid lowering of cytosolic free calcium in the outer segment of both retinal rod and cone photoreceptors and the light-induced lowering of calcium is caused by extrusion via this protein which plays a key role in the process of light adaptation. In Rattus norvegicus (Rat), this protein is Sodium/potassium/calcium exchanger 1 (Slc24a1).